A 222-amino-acid polypeptide reads, in one-letter code: Germin-like protein subfamily 1 member 20 (222 aa).

The N-terminal stretch at 1–22 (MRVSQSLVPFAIIALVLSFVNA) is a signal peptide. A disulfide bond links Cys32 and Cys48. The 152-residue stretch at 62–213 (SGLNVPGNTN…AFQLDASVVK (152 aa)) folds into the Cupin type-1 domain. N-linked (GlcNAc...) asparagine glycosylation occurs at Asn77. Mn(2+) is bound by residues His110, His112, Glu117, and His159.

The protein belongs to the germin family. Oligomer (believed to be a pentamer but probably hexamer). Expressed in stems and developing embryos.

The protein resides in the secreted. The protein localises to the extracellular space. It is found in the apoplast. In terms of biological role, may play a role in plant defense. Probably has no oxalate oxidase activity even if the active site is conserved. In Arabidopsis thaliana (Mouse-ear cress), this protein is Germin-like protein subfamily 1 member 20 (GLP5A).